The chain runs to 348 residues: Dihydroorotase (348 aa).

Zn(2+)-binding residues include histidine 17 and histidine 19. Substrate contacts are provided by residues 19–21 (HLR) and asparagine 45. The Zn(2+) site is built by lysine 103, histidine 140, and histidine 178. An N6-carboxylysine modification is found at lysine 103. Histidine 140 lines the substrate pocket. A substrate-binding site is contributed by leucine 223. Aspartate 251 is a Zn(2+) binding site. Aspartate 251 is an active-site residue. The substrate site is built by histidine 255 and alanine 267.

This sequence belongs to the metallo-dependent hydrolases superfamily. DHOase family. Class II DHOase subfamily. As to quaternary structure, homodimer. Zn(2+) serves as cofactor.

The catalysed reaction is (S)-dihydroorotate + H2O = N-carbamoyl-L-aspartate + H(+). It participates in pyrimidine metabolism; UMP biosynthesis via de novo pathway; (S)-dihydroorotate from bicarbonate: step 3/3. Its function is as follows. Catalyzes the reversible cyclization of carbamoyl aspartate to dihydroorotate. The polypeptide is Dihydroorotase (Yersinia pseudotuberculosis serotype O:1b (strain IP 31758)).